A 136-amino-acid polypeptide reads, in one-letter code: Transcription antitermination protein NusB (136 aa).

The protein belongs to the NusB family.

Functionally, involved in transcription antitermination. Required for transcription of ribosomal RNA (rRNA) genes. Binds specifically to the boxA antiterminator sequence of the ribosomal RNA (rrn) operons. The polypeptide is Transcription antitermination protein NusB (Pseudarthrobacter chlorophenolicus (strain ATCC 700700 / DSM 12829 / CIP 107037 / JCM 12360 / KCTC 9906 / NCIMB 13794 / A6) (Arthrobacter chlorophenolicus)).